Consider the following 1257-residue polypeptide: Insulin receptor substrate 4 (1257 aa).

The 122-residue stretch at E78 to L199 folds into the PH domain. The IRS-type PTB domain maps to Y231–E335. Disordered regions lie at residues V406–F653, I678–Y921, and Q1179–R1257. A compositionally biased stretch (basic residues) spans H408–R424. The YXXM motif 1 signature appears at Y487–M490. Over residues S495–G509 the composition is skewed to gly residues. Positions Q510–G524 are enriched in low complexity. Gly residues-rich tracts occupy residues E525–G542 and G551–G599. Pro residues predominate over residues M627–A640. Over residues G641 to G650 the composition is skewed to gly residues. Positions I678–S800 are CRK-binding. Short sequence motifs (YXXM motif) lie at residues Y700–M703, Y717–M720, and Y743–M746. Positions V750 to A761 are enriched in pro residues. Positions D763–D774 are enriched in basic and acidic residues. The YXXM motif 5 motif lies at Y779–M782. Low complexity predominate over residues S800–S810. The segment covering F815 to S826 has biased composition (polar residues). Positions Y828–M831 match the YXXM motif 6 motif. A compositionally biased stretch (basic and acidic residues) spans G840 to A855. A GRB2-binding region spans residues I895 to K897. Phosphotyrosine is present on Y921. The YXXM motif 7 signature appears at Y921–M924. The segment covering D1236–R1257 has biased composition (basic and acidic residues).

As to quaternary structure, interacts with SOCS6 in response to stimulation with either insulin or IGF1. Interacts with CRK and CRKL. Interaction with CRK is stronger than with CRKL. Interacts with CRK via the phosphorylated YXXM motifs. Interacts with GRB2 and PIK3R1. Interacts with PLC-gamma, SHC1, PTK6, PPP4C and NISCH. Interacts with ASB4; this interaction promotes IRS4 proteasomal degradation. In terms of processing, phosphorylated on tyrosine residues in response to both insulin and IGF1 signaling. Phosphorylated on Tyr-921 in response to FGF2 signaling. Phosphorylation of Tyr-921 is required for GRB2, phospholipase C-gamma and phosphatidylinositol 3-kinase interaction. Post-translationally, ubiquitinated in a ASB4-dependent manner, leading to proteasomal degradation. Expressed in myoblasts. Expressed in liver and hepatocellular carcinoma.

It localises to the cell membrane. Functionally, acts as an interface between multiple growth factor receptors possessing tyrosine kinase activity, such as insulin receptor, IGF1R and FGFR1, and a complex network of intracellular signaling molecules containing SH2 domains. Involved in the IGF1R mitogenic signaling pathway. Promotes the AKT1 signaling pathway and BAD phosphorylation during insulin stimulation without activation of RPS6KB1 or the inhibition of apoptosis. Interaction with GRB2 enhances insulin-stimulated mitogen-activated protein kinase activity. May be involved in nonreceptor tyrosine kinase signaling in myoblasts. Plays a pivotal role in the proliferation/differentiation of hepatoblastoma cell through EPHB2 activation upon IGF1 stimulation. May play a role in the signal transduction in response to insulin and to a lesser extent in response to IL4 and GH on mitogenesis. Plays a role in growth, reproduction and glucose homeostasis. May act as negative regulators of the IGF1 signaling pathway by suppressing the function of IRS1 and IRS2. The chain is Insulin receptor substrate 4 (IRS4) from Homo sapiens (Human).